The sequence spans 584 residues: N(6)-adenosine-methyltransferase subunit METTL3 (584 aa).

2 disordered regions span residues 1–65 (MSDT…EHPP) and 162–221 (KADD…SNKV). A compositionally biased stretch (polar residues) spans 187 to 204 (RKSSVSLATASISQLTAS). The Nuclear localization signal motif lies at 213–220 (DKKGRSNK). Residues 381 to 382 (DI) and Asp399 contribute to the S-adenosyl-L-methionine site. Positions 400–414 (PPWDIHMELPYGTLT) are gate loop 1. 2 interaction with METTL14 regions span residues 454–458 (DRVDE) and 468–484 (QRII…NHGK). An interphase loop region spans residues 466–483 (QLQRIIRTGRTGHWLNHG). Residues 469-482 (RIIRTGRTGHWLNH) are positively charged region required for RNA-binding. Positions 511–519 (VRSTSHKPD) are gate loop 2. Residues Lys517, 540 to 543 (RPHN), and 553 to 554 (NQ) each bind S-adenosyl-L-methionine.

The protein belongs to the MT-A70-like family. In terms of assembly, heterodimer; heterodimerizes with mettl14 to form an antiparallel heterodimer that constitutes an active methyltransferase. Component of the WMM complex, a N6-methyltransferase complex composed of a catalytic subcomplex, named MAC, and of an associated subcomplex, named MACOM. The MAC subcomplex is composed of mettl3 and mettl14. As to expression, expressed in the hemato-vascular system: enriched in sorted endothelial cells and haemogenic endothelium.

Its subcellular location is the nucleus. The protein localises to the nucleus speckle. The protein resides in the cytoplasm. It carries out the reaction an adenosine in mRNA + S-adenosyl-L-methionine = an N(6)-methyladenosine in mRNA + S-adenosyl-L-homocysteine + H(+). The METTL3-METTL14 heterodimer forms a N6-methyltransferase complex that methylates adenosine residues at the N(6) position of some RNAs and regulates various processes such as the circadian clock, differentiation of embryonic and hematopoietic stem cells, cortical neurogenesis, response to DNA damage, differentiation of T-cells and primary miRNA processing. In the heterodimer formed with mettl14, mettl3 constitutes the catalytic core. N6-methyladenosine (m6A), which takes place at the 5'-[AG]GAC-3' consensus sites of some mRNAs, plays a role in mRNA stability, processing and translation efficiency. M6A is also involved in hematopoietic stem cells specification: m6A methylation and subsequent destabilization of mRNAs, such as notch1a, leads to decreased Notch signaling, promoting endothelial to hematopoietic transition. M6A also takes place in other RNA molecules, such as primary miRNA (pri-miRNAs). Mediates methylation of pri-miRNAs. This is N(6)-adenosine-methyltransferase subunit METTL3 from Danio rerio (Zebrafish).